The sequence spans 250 residues: UPF0736 protein RBAM_011410 (250 aa).

It belongs to the UPF0736 family.

This is UPF0736 protein RBAM_011410 from Bacillus velezensis (strain DSM 23117 / BGSC 10A6 / LMG 26770 / FZB42) (Bacillus amyloliquefaciens subsp. plantarum).